We begin with the raw amino-acid sequence, 130 residues long: Small ribosomal subunit protein uS8 (130 aa).

This sequence belongs to the universal ribosomal protein uS8 family. In terms of assembly, part of the 30S ribosomal subunit. Contacts proteins S5 and S12.

Its function is as follows. One of the primary rRNA binding proteins, it binds directly to 16S rRNA central domain where it helps coordinate assembly of the platform of the 30S subunit. This is Small ribosomal subunit protein uS8 from Chromohalobacter salexigens (strain ATCC BAA-138 / DSM 3043 / CIP 106854 / NCIMB 13768 / 1H11).